A 189-amino-acid chain; its full sequence is Thymidine kinase (189 aa).

ATP-binding positions include 9 to 16 (GTMNSGKT) and 85 to 88 (DESQ). The active-site Proton acceptor is the glutamate 86. Zn(2+) contacts are provided by cysteine 143, cysteine 146, cysteine 180, and histidine 183.

This sequence belongs to the thymidine kinase family. In terms of assembly, homotetramer.

It is found in the cytoplasm. It carries out the reaction thymidine + ATP = dTMP + ADP + H(+). The protein is Thymidine kinase of Streptococcus pyogenes serotype M1.